The primary structure comprises 337 residues: Adenosine deaminase-like protein (337 aa).

Positions 14 and 16 each coordinate Zn(2+). N(6)-methyl-AMP contacts are provided by residues histidine 16, asparagine 18, histidine 66, 98–101 (TTPK), and glycine 171. Residue histidine 198 participates in Zn(2+) binding. Residues glutamate 201, aspartate 276, and aspartate 277 each contribute to the N(6)-methyl-AMP site. Glutamate 201 serves as the catalytic Proton donor. Position 276 (aspartate 276) interacts with Zn(2+).

Belongs to the metallo-dependent hydrolases superfamily. Adenosine and AMP deaminases family. Monomer. It depends on Zn(2+) as a cofactor.

It carries out the reaction N(6)-methyl-AMP + H2O + H(+) = IMP + methylamine. Functionally, catalyzes the hydrolysis of the free cytosolic methylated adenosine nucleotide N(6)-methyl-AMP (N6-mAMP) to produce inositol monophosphate (IMP) and methylamine. Is required for the catabolism of cytosolic N6-mAMP, which is derived from the degradation of mRNA containing N6-methylated adenine (m6A). This is Adenosine deaminase-like protein (Ada) from Drosophila melanogaster (Fruit fly).